Here is an 85-residue protein sequence, read N- to C-terminus: Protein MANBAL (85 aa).

The chain crosses the membrane as a helical span at residues 24–44 (YGLFLGAIFQLICVLAIIVPI). Over residues 49 to 64 (EAEAEQAEPRSAEGPK) the composition is skewed to basic and acidic residues. The disordered stretch occupies residues 49–85 (EAEAEQAEPRSAEGPKKPKAAIASTNKRPKKETKKKR). Residues 75–85 (KRPKKETKKKR) show a composition bias toward basic residues.

Belongs to the UPF0239 family.

The protein localises to the membrane. This chain is Protein MANBAL (Manbal), found in Mus musculus (Mouse).